Here is a 601-residue protein sequence, read N- to C-terminus: Proteasome-associated ATPase (601 aa).

Residues 1 to 15 show a composition bias toward gly residues; that stretch reads MSGPRSGSGSGGSTG. The segment at 1–29 is disordered; sequence MSGPRSGSGSGGSTGRPGDADSQRSAYEK. Residues 18–29 show a composition bias toward basic and acidic residues; it reads GDADSQRSAYEK. Positions 19–106 form a coiled coil; that stretch reads DADSQRSAYE…LKEEVDRLAQ (88 aa). ATP is bound at residue 289–294; sequence GCGKTL. The interval 600–601 is docks into pockets in the proteasome alpha-ring; sequence YL.

The protein belongs to the AAA ATPase family. As to quaternary structure, homohexamer. Assembles into a hexameric ring structure that caps the 20S proteasome core. Strongly interacts with the prokaryotic ubiquitin-like protein Pup through a hydrophobic interface; the interacting region of ARC lies in its N-terminal coiled-coil domain. There is one Pup binding site per ARC hexamer ring. Upon ATP-binding, the C-terminus of ARC interacts with the alpha-rings of the proteasome core, possibly by binding to the intersubunit pockets.

It participates in protein degradation; proteasomal Pup-dependent pathway. Its function is as follows. ATPase which is responsible for recognizing, binding, unfolding and translocation of pupylated proteins into the bacterial 20S proteasome core particle. May be essential for opening the gate of the 20S proteasome via an interaction with its C-terminus, thereby allowing substrate entry and access to the site of proteolysis. Thus, the C-termini of the proteasomal ATPase may function like a 'key in a lock' to induce gate opening and therefore regulate proteolysis. In Parafrankia sp. (strain EAN1pec), this protein is Proteasome-associated ATPase.